The sequence spans 364 residues: UDP-N-acetylglucosamine--N-acetylmuramyl-(pentapeptide) pyrophosphoryl-undecaprenol N-acetylglucosamine transferase (364 aa).

UDP-N-acetyl-alpha-D-glucosamine contacts are provided by residues 12–14, N124, R167, S195, I249, 268–273, and Q294; these read TGG and ALTVSE.

Belongs to the glycosyltransferase 28 family. MurG subfamily.

It localises to the cell inner membrane. It carries out the reaction di-trans,octa-cis-undecaprenyl diphospho-N-acetyl-alpha-D-muramoyl-L-alanyl-D-glutamyl-meso-2,6-diaminopimeloyl-D-alanyl-D-alanine + UDP-N-acetyl-alpha-D-glucosamine = di-trans,octa-cis-undecaprenyl diphospho-[N-acetyl-alpha-D-glucosaminyl-(1-&gt;4)]-N-acetyl-alpha-D-muramoyl-L-alanyl-D-glutamyl-meso-2,6-diaminopimeloyl-D-alanyl-D-alanine + UDP + H(+). It participates in cell wall biogenesis; peptidoglycan biosynthesis. In terms of biological role, cell wall formation. Catalyzes the transfer of a GlcNAc subunit on undecaprenyl-pyrophosphoryl-MurNAc-pentapeptide (lipid intermediate I) to form undecaprenyl-pyrophosphoryl-MurNAc-(pentapeptide)GlcNAc (lipid intermediate II). The chain is UDP-N-acetylglucosamine--N-acetylmuramyl-(pentapeptide) pyrophosphoryl-undecaprenol N-acetylglucosamine transferase from Alteromonas mediterranea (strain DSM 17117 / CIP 110805 / LMG 28347 / Deep ecotype).